Reading from the N-terminus, the 1679-residue chain is GRIP and coiled-coil domain-containing protein 2 (1679 aa).

Position 1 is an N-acetylmethionine (M1). Disordered stretches follow at residues 1–23 (MEDS…KLET) and 1466–1522 (LKSE…SAGT). The stretch at 35 to 1469 (KQMMLLQKAK…ETQLFQLKSE (1435 aa)) forms a coiled coil. Phosphoserine occurs at positions 1474 and 1478. Positions 1474-1483 (SPASSHQPSK) are enriched in polar residues. Residues 1569–1608 (HLNGLLRETEATNAILMEQIKLLKSEIRRLERNQEREKSV) form a mediates interaction with RAB6A region. Positions 1569 to 1679 (HLNGLLRETE…SYLHSWSGLR (111 aa)) are mediates interaction with RAB9A. Residues 1604–1654 (REKSVANLEYLKNVLLRFIFLKPGSERERLLPVIDTMLQLSPEEKGKLATV) form the GRIP domain.

In terms of assembly, homodimer. Interacts (via GRIP domain) with RAB6A (preferentially in its GTP-bound form). May interact (RAB6A-dependent) with ARL1; might be involved in GCC2 Golgi localization. Interacts with CLASP1 and CLASP2; recruits both proteins to membranes of the TGN. Interacts with STX16. Interacts (probably via GRIP domain) with RAB9A (preferentially in its GTP-bound form).

The protein resides in the cytoplasm. It is found in the golgi apparatus. It localises to the trans-Golgi network membrane. Golgin which probably tethers transport vesicles to the trans-Golgi network (TGN) and regulates vesicular transport between the endosomes and the Golgi. As a RAB9A effector it is involved in recycling of the mannose 6-phosphate receptor from the late endosomes to the TGN. May also play a role in transport between the recycling endosomes and the Golgi. Required for maintenance of the Golgi structure, it is involved in the biogenesis of noncentrosomal, Golgi-associated microtubules through recruitment of CLASP1 and CLASP2. The polypeptide is GRIP and coiled-coil domain-containing protein 2 (Gcc2) (Rattus norvegicus (Rat)).